The primary structure comprises 773 residues: Cytochrome c oxidase subunit 1+2 (773 aa).

The segment at 1-491 (MKLLEIYDKQ…LIASYGSLIT (491 aa)) is COX1. The chain crosses the membrane as a helical span at residues 41–61 (TMYITFSIFAGIIGTLLSLVI). Glu-64 lines the Ca(2+) pocket. His-85 contributes to the Fe(II)-heme a binding site. Helical transmembrane passes span 87–111 (LIMIFFVVMYCSMPAMLGGFANWFL), 130–150 (LWLIVVSFGLLLTSSCVGIGA), 173–193 (VGILSLHIAGASSLVGAINFL), 211–231 (LFVWSVVITAVLLVLSLPVLA), 262–278 (LFHPEVYILILPGFGII), and 290–310 (IFGVKGMISAMSAIGFLGFLV). Residue His-264 coordinates Cu cation. The segment at residues 264 to 268 (HPEVY) is a cross-link (1'-histidyl-3'-tyrosine (His-Tyr)). Tyr-268 serves as a coordination point for O2. Cu cation contacts are provided by His-314 and His-315. Helical transmembrane passes span 335 to 355 (IIAIPTGIKIFSWLATLWGGV) and 362 to 382 (MLFVIGFLVLFTIGGLTGVVL). Mg(2+) contacts are provided by His-392 and Asp-393. A run of 5 helical transmembrane segments spans residues 396–416 (YVVAHFHYVLSMGAIFAIFAG), 444–464 (FWTMFIGVNVTFFPMHFLGLA), 483–503 (IASYGSLITAFGLLFFFVNIF), 555–575 (IFFYLIVVAVFIGWVMGRILW), and 604–624 (GTVIEIVWTLIPTVILYLIAI). His-400 is a binding site for heme a3. His-402 contacts Fe(II)-heme a. Residues 492 to 773 (AFGLLFFFVN…VQEYLGRLYK (282 aa)) form a COX2 region. Cu cation is bound by residues His-709, Cys-744, Cys-748, and His-752.

This sequence in the N-terminal section; belongs to the heme-copper respiratory oxidase family. The protein in the C-terminal section; belongs to the cytochrome c oxidase subunit 2 family. In terms of assembly, component of the cytochrome c oxidase (complex IV, CIV), a multisubunit enzyme composed of a catalytic core of 3 subunits and several supernumerary subunits. The complex exists as a monomer or a dimer and forms supercomplexes (SCs) in the inner mitochondrial membrane with ubiquinol-cytochrome c oxidoreductase (cytochrome b-c1 complex, complex III, CIII). Requires heme as cofactor. Cu cation is required as a cofactor.

It localises to the mitochondrion inner membrane. The catalysed reaction is 4 Fe(II)-[cytochrome c] + O2 + 8 H(+)(in) = 4 Fe(III)-[cytochrome c] + 2 H2O + 4 H(+)(out). It functions in the pathway energy metabolism; oxidative phosphorylation. Functionally, component of the cytochrome c oxidase, the last enzyme in the mitochondrial electron transport chain which drives oxidative phosphorylation. The respiratory chain contains 3 multisubunit complexes succinate dehydrogenase (complex II, CII), ubiquinol-cytochrome c oxidoreductase (cytochrome b-c1 complex, complex III, CIII) and cytochrome c oxidase (complex IV, CIV), that cooperate to transfer electrons derived from NADH and succinate to molecular oxygen, creating an electrochemical gradient over the inner membrane that drives transmembrane transport and the ATP synthase. Cytochrome c oxidase is the component of the respiratory chain that catalyzes the reduction of oxygen to water. Electrons originating from reduced cytochrome c in the intermembrane space (IMS) are transferred via the dinuclear copper A center (CU(A)) of subunit 2 and heme A of subunit 1 to the active site in subunit 1, a binuclear center (BNC) formed by heme A3 and copper B (CU(B)). The BNC reduces molecular oxygen to 2 water molecules using 4 electrons from cytochrome c in the IMS and 4 protons from the mitochondrial matrix. The chain is Cytochrome c oxidase subunit 1+2 (cox1/2) from Dictyostelium citrinum (Slime mold).